A 516-amino-acid polypeptide reads, in one-letter code: GMP synthase [glutamine-hydrolyzing] (516 aa).

In terms of domain architecture, Glutamine amidotransferase type-1 spans 5–199; the sequence is PIVILDFGSQ…ARKICGITSK (195 aa). Residue Cys-82 is the Nucleophile of the active site. Residues His-173 and Glu-175 contribute to the active site. The GMPS ATP-PPase domain maps to 200–391; that stretch reads WDMGHFAKEQ…LGLPREMVYR (192 aa). Position 227-233 (227-233) interacts with ATP; the sequence is SGGVDSS.

In terms of assembly, homodimer.

It catalyses the reaction XMP + L-glutamine + ATP + H2O = GMP + L-glutamate + AMP + diphosphate + 2 H(+). It participates in purine metabolism; GMP biosynthesis; GMP from XMP (L-Gln route): step 1/1. Catalyzes the synthesis of GMP from XMP. The protein is GMP synthase [glutamine-hydrolyzing] of Nitratiruptor sp. (strain SB155-2).